The primary structure comprises 570 residues: Adenine deaminase (570 aa).

This sequence belongs to the metallo-dependent hydrolases superfamily. Adenine deaminase family. The cofactor is Mn(2+).

It carries out the reaction adenine + H2O + H(+) = hypoxanthine + NH4(+). The sequence is that of Adenine deaminase from Petrotoga mobilis (strain DSM 10674 / SJ95).